Reading from the N-terminus, the 176-residue chain is RNA pyrophosphohydrolase (176 aa).

One can recognise a Nudix hydrolase domain in the interval 6-149 (GYRPNVGIVI…KRDVYRRVMK (144 aa)). The Nudix box motif lies at 38-59 (GGINPGESAEQAMYRELFEEVG).

This sequence belongs to the Nudix hydrolase family. RppH subfamily. The cofactor is a divalent metal cation.

In terms of biological role, accelerates the degradation of transcripts by removing pyrophosphate from the 5'-end of triphosphorylated RNA, leading to a more labile monophosphorylated state that can stimulate subsequent ribonuclease cleavage. In Shigella boydii serotype 4 (strain Sb227), this protein is RNA pyrophosphohydrolase.